Consider the following 849-residue polypeptide: MAP7 domain-containing protein 1 (849 aa).

Disordered regions lie at residues 1–151 (MESG…REER) and 186–210 (EQRLKAEQRRAALEERQRQKLEKNK). Over residues 24-41 (EPRPSPEGDPSPPPPPTP) the composition is skewed to pro residues. Threonine 49 and threonine 53 each carry phosphothreonine. A phosphoserine mark is found at serine 72 and serine 95. A Phosphothreonine modification is found at threonine 99. Serine 115 and serine 118 each carry phosphoserine. Threonine 120 is subject to Phosphothreonine. Phosphoserine occurs at positions 125 and 127. Residues 132-151 (QDVKKAGERHKLAKERREER) show a composition bias toward basic and acidic residues. Residues 167-223 (EKAKALREKQLQERRRRLEEQRLKAEQRRAALEERQRQKLEKNKERYEAAIQRSVKK) adopt a coiled-coil conformation. 5 positions are modified to phosphoserine: serine 256, serine 275, serine 315, serine 368, and serine 401. The interval 318–815 (TLPRNGRDQG…GFPAKGTAGD (498 aa)) is disordered. Basic and acidic residues predominate over residues 407–437 (RRLEATPVQKKEKKDKERENEKEKSALARER). Residues serine 444, serine 448, serine 454, and serine 460 each carry the phosphoserine modification. The span at 457–474 (AELSTKSKARPTSPSTTW) shows a compositional bias: polar residues. Lysine 462 participates in a covalent cross-link: Glycyl lysine isopeptide (Lys-Gly) (interchain with G-Cter in SUMO2). Residues serine 479 and serine 496 each carry the phosphoserine modification. Positions 479–497 (SPCPSPGPGHTLPPKPPSP) are enriched in pro residues. Positions 523–539 (PEDKNHSKSRTAEEKEP) are enriched in basic and acidic residues. The segment covering 542 to 556 (PASPAPSPVPSPTPA) has biased composition (pro residues). 3 positions are modified to phosphoserine: serine 544, serine 548, and serine 552. Residue threonine 554 is modified to Phosphothreonine. The segment covering 568–582 (PPDTAVPAVPTVPTF) has biased composition (low complexity). Residues 602 to 724 (TTDREEATRL…QERRKRLEEI (123 aa)) are a coiled coil. Residues 603–743 (TDREEATRLL…AETKKQDGKE (141 aa)) show a composition bias toward basic and acidic residues.

Belongs to the MAP7 family.

The protein localises to the cytoplasm. Its subcellular location is the cytoskeleton. The protein resides in the spindle. It localises to the microtubule organizing center. It is found in the centrosome. The protein localises to the midbody. Functionally, microtubule-stabilizing protein involved in the control of cell motility and neurite outgrowth. Facilitate microtubule stabilization through the maintenance of acetylated stable microtubules. This is MAP7 domain-containing protein 1 (Map7d1) from Rattus norvegicus (Rat).